Here is a 565-residue protein sequence, read N- to C-terminus: Thiol:disulfide interchange protein DsbD (565 aa).

An N-terminal signal peptide occupies residues 1-19 (MAQRIFTLILLLCSTSVFA). Disulfide bonds link cysteine 122-cysteine 128 and cysteine 182-cysteine 304. 7 consecutive transmembrane segments (helical) span residues 163–183 (LPFSALWALLIGIGIAFTPCV), 208–228 (LLTFIYVQGMALTYTALGLVV), 243–263 (YVLIGLAIVFTLLAMSMFGLF), 296–316 (IAGLICSPCTTAPLSAILLYI), 323–343 (WLGGGTLYLYALGMGLPLMLI), 365–385 (FGFVILALPVFLLERVIGDIW), and 386–406 (GLRLWSALGVAFFGGAFITSL). Residues 434–565 (WAFGATHTAQ…FSAHLRDRQP (132 aa)) form the Thioredoxin domain. Cysteine 480 and cysteine 483 are joined by a disulfide.

Belongs to the thioredoxin family. DsbD subfamily.

It localises to the cell inner membrane. It carries out the reaction [protein]-dithiol + NAD(+) = [protein]-disulfide + NADH + H(+). The catalysed reaction is [protein]-dithiol + NADP(+) = [protein]-disulfide + NADPH + H(+). Required to facilitate the formation of correct disulfide bonds in some periplasmic proteins and for the assembly of the periplasmic c-type cytochromes. Acts by transferring electrons from cytoplasmic thioredoxin to the periplasm. This transfer involves a cascade of disulfide bond formation and reduction steps. In Shigella dysenteriae serotype 1 (strain Sd197), this protein is Thiol:disulfide interchange protein DsbD.